Here is a 270-residue protein sequence, read N- to C-terminus: Type III pantothenate kinase (270 aa).

Residue 16–23 coordinates ATP; sequence EIGNTTAM. Substrate-binding positions include tyrosine 106 and 113 to 116; that span reads GADR. Aspartate 115 (proton acceptor) is an active-site residue. Aspartate 136 contacts K(+). Residue threonine 139 coordinates ATP. A substrate-binding site is contributed by threonine 191.

The protein belongs to the type III pantothenate kinase family. Homodimer. The cofactor is NH4(+). K(+) serves as cofactor.

Its subcellular location is the cytoplasm. It catalyses the reaction (R)-pantothenate + ATP = (R)-4'-phosphopantothenate + ADP + H(+). Its pathway is cofactor biosynthesis; coenzyme A biosynthesis; CoA from (R)-pantothenate: step 1/5. In terms of biological role, catalyzes the phosphorylation of pantothenate (Pan), the first step in CoA biosynthesis. The protein is Type III pantothenate kinase of Chlorobium luteolum (strain DSM 273 / BCRC 81028 / 2530) (Pelodictyon luteolum).